Consider the following 199-residue polypeptide: Transgelin-3 (199 aa).

Positions 24-136 (ADLENKLVDW…RTLMALGSVA (113 aa)) constitute a Calponin-homology (CH) domain. Ser163 carries the phosphoserine modification. Residues 174–199 (IGLQMGSNKGASQAGMTGYGMPRQIM) form a Calponin-like repeat. Polar residues predominate over residues 178-188 (MGSNKGASQAG). Residues 178 to 199 (MGSNKGASQAGMTGYGMPRQIM) form a disordered region.

This sequence belongs to the calponin family.

In Bos taurus (Bovine), this protein is Transgelin-3 (TAGLN3).